The chain runs to 222 residues: Peptide methionine sulfoxide reductase MsrA (222 aa).

Cys55 is a catalytic residue.

This sequence belongs to the MsrA Met sulfoxide reductase family.

It catalyses the reaction L-methionyl-[protein] + [thioredoxin]-disulfide + H2O = L-methionyl-(S)-S-oxide-[protein] + [thioredoxin]-dithiol. It carries out the reaction [thioredoxin]-disulfide + L-methionine + H2O = L-methionine (S)-S-oxide + [thioredoxin]-dithiol. Has an important function as a repair enzyme for proteins that have been inactivated by oxidation. Catalyzes the reversible oxidation-reduction of methionine sulfoxide in proteins to methionine. This Streptomyces griseus subsp. griseus (strain JCM 4626 / CBS 651.72 / NBRC 13350 / KCC S-0626 / ISP 5235) protein is Peptide methionine sulfoxide reductase MsrA.